Reading from the N-terminus, the 434-residue chain is Glutamyl-tRNA reductase (434 aa).

Residues 49–52 (TCNR), serine 109, 114–116 (EPQ), and glutamine 120 contribute to the substrate site. The Nucleophile role is filled by cysteine 50. 189 to 194 (GAGEMC) is a binding site for NADP(+).

Belongs to the glutamyl-tRNA reductase family. As to quaternary structure, homodimer.

It catalyses the reaction (S)-4-amino-5-oxopentanoate + tRNA(Glu) + NADP(+) = L-glutamyl-tRNA(Glu) + NADPH + H(+). The protein operates within porphyrin-containing compound metabolism; protoporphyrin-IX biosynthesis; 5-aminolevulinate from L-glutamyl-tRNA(Glu): step 1/2. Catalyzes the NADPH-dependent reduction of glutamyl-tRNA(Glu) to glutamate 1-semialdehyde (GSA). In Geotalea uraniireducens (strain Rf4) (Geobacter uraniireducens), this protein is Glutamyl-tRNA reductase.